An 849-amino-acid polypeptide reads, in one-letter code: Disks large homolog 3 (849 aa).

The interval 32-101 (DWQVPDPYGP…GKSTPKLNGS (70 aa)) is disordered. Residues 41–53 (PSGGNGASSGYGG) show a composition bias toward gly residues. Over residues 57–69 (QTLPSQAGATPTP) the composition is skewed to polar residues. PDZ domains are found at residues 149-235 (EIVL…VRRR), 244-330 (EVNL…VAKP), and 404-484 (KIIL…AQYR). Position 157 is a phosphoserine (S157). Residues 519–589 (KRSLYVRALF…PSKKRVEKKE (71 aa)) enclose the SH3 domain. The region spanning 659–834 (ARPVIILGPM…IYNKIKQIIE (176 aa)) is the Guanylate kinase-like domain. Y705 is subject to Phosphotyrosine.

This sequence belongs to the MAGUK family. As to quaternary structure, interacts through its PDZ domains with NETO1, GRIN2B, SYNGAP1 and APC. Interacts through its first two PDZ domains with ERBB4. Interacts through its third PDZ domain with NLGN1, and probably with NLGN2 and NLGN3. Interacts through its guanylate kinase-like domain with DLGAP1, DLGAP2, DLGAP3 and DLGAP4. Interacts with FRMPD4 (via C-terminus). Interacts with LRFN1, LRFN2 and LRFN4. Interacts with FLTP. Interacts with GPR85. Interacts with DGKI (via PDZ-binding motif).

Required for learning most likely through its role in synaptic plasticity following NMDA receptor signaling. The protein is Disks large homolog 3 (Dlg3) of Mus musculus (Mouse).